Reading from the N-terminus, the 202-residue chain is N-(5'-phosphoribosyl)anthranilate isomerase (202 aa).

It belongs to the TrpF family.

It carries out the reaction N-(5-phospho-beta-D-ribosyl)anthranilate = 1-(2-carboxyphenylamino)-1-deoxy-D-ribulose 5-phosphate. It participates in amino-acid biosynthesis; L-tryptophan biosynthesis; L-tryptophan from chorismate: step 3/5. The sequence is that of N-(5'-phosphoribosyl)anthranilate isomerase from Listeria monocytogenes serotype 4a (strain HCC23).